A 488-amino-acid polypeptide reads, in one-letter code: UDP-N-acetylmuramate--L-alanine ligase (488 aa).

127–133 (GTHGKTT) is a binding site for ATP.

This sequence belongs to the MurCDEF family.

The protein localises to the cytoplasm. The enzyme catalyses UDP-N-acetyl-alpha-D-muramate + L-alanine + ATP = UDP-N-acetyl-alpha-D-muramoyl-L-alanine + ADP + phosphate + H(+). It functions in the pathway cell wall biogenesis; peptidoglycan biosynthesis. Functionally, cell wall formation. The sequence is that of UDP-N-acetylmuramate--L-alanine ligase from Shewanella putrefaciens (strain CN-32 / ATCC BAA-453).